The sequence spans 257 residues: Diaminopimelate epimerase (257 aa).

Substrate-binding residues include Asn-6 and Asn-57. Cys-66 acts as the Proton donor in catalysis. Substrate-binding positions include 67-68 (GN), Asn-170, and 188-189 (ER). The active-site Proton acceptor is Cys-198. Residue 199–200 (GT) coordinates substrate.

Belongs to the diaminopimelate epimerase family. Homodimer.

Its subcellular location is the cytoplasm. The catalysed reaction is (2S,6S)-2,6-diaminopimelate = meso-2,6-diaminopimelate. It participates in amino-acid biosynthesis; L-lysine biosynthesis via DAP pathway; DL-2,6-diaminopimelate from LL-2,6-diaminopimelate: step 1/1. Catalyzes the stereoinversion of LL-2,6-diaminopimelate (L,L-DAP) to meso-diaminopimelate (meso-DAP), a precursor of L-lysine and an essential component of the bacterial peptidoglycan. In Chlorobaculum tepidum (strain ATCC 49652 / DSM 12025 / NBRC 103806 / TLS) (Chlorobium tepidum), this protein is Diaminopimelate epimerase.